The following is a 274-amino-acid chain: Putative pyruvate, phosphate dikinase regulatory protein 1 (274 aa).

Position 149–156 (149–156 (GISRTSKT)) interacts with ADP.

It belongs to the pyruvate, phosphate/water dikinase regulatory protein family. PDRP subfamily.

It carries out the reaction N(tele)-phospho-L-histidyl/L-threonyl-[pyruvate, phosphate dikinase] + ADP = N(tele)-phospho-L-histidyl/O-phospho-L-threonyl-[pyruvate, phosphate dikinase] + AMP + H(+). The catalysed reaction is N(tele)-phospho-L-histidyl/O-phospho-L-threonyl-[pyruvate, phosphate dikinase] + phosphate + H(+) = N(tele)-phospho-L-histidyl/L-threonyl-[pyruvate, phosphate dikinase] + diphosphate. Bifunctional serine/threonine kinase and phosphorylase involved in the regulation of the pyruvate, phosphate dikinase (PPDK) by catalyzing its phosphorylation/dephosphorylation. The polypeptide is Putative pyruvate, phosphate dikinase regulatory protein 1 (Listeria welshimeri serovar 6b (strain ATCC 35897 / DSM 20650 / CCUG 15529 / CIP 8149 / NCTC 11857 / SLCC 5334 / V8)).